The chain runs to 460 residues: Bifunctional protein GlmU (460 aa).

A pyrophosphorylase region spans residues 1 to 232; it reads MALNVVILAA…AIEVEGANNR (232 aa). UDP-N-acetyl-alpha-D-glucosamine-binding positions include 8–11, K22, Q73, 78–79, 100–102, G137, E157, N172, and N230; these read LAAG, GT, and YGD. D102 is a binding site for Mg(2+). Residue N230 participates in Mg(2+) binding. The tract at residues 233-253 is linker; sequence VQLAQLERAYQAREAEKLMLA. The interval 254 to 460 is N-acetyltransferase; that stretch reads GANLRDPSRI…GWQRPVKIKK (207 aa). The UDP-N-acetyl-alpha-D-glucosamine site is built by R336 and K354. H366 serves as the catalytic Proton acceptor. Positions 369 and 380 each coordinate UDP-N-acetyl-alpha-D-glucosamine. Acetyl-CoA is bound by residues A383, 389–390, S408, A426, and R443; that span reads NY.

This sequence in the N-terminal section; belongs to the N-acetylglucosamine-1-phosphate uridyltransferase family. The protein in the C-terminal section; belongs to the transferase hexapeptide repeat family. As to quaternary structure, homotrimer. It depends on Mg(2+) as a cofactor.

It localises to the cytoplasm. It catalyses the reaction alpha-D-glucosamine 1-phosphate + acetyl-CoA = N-acetyl-alpha-D-glucosamine 1-phosphate + CoA + H(+). The enzyme catalyses N-acetyl-alpha-D-glucosamine 1-phosphate + UTP + H(+) = UDP-N-acetyl-alpha-D-glucosamine + diphosphate. It participates in nucleotide-sugar biosynthesis; UDP-N-acetyl-alpha-D-glucosamine biosynthesis; N-acetyl-alpha-D-glucosamine 1-phosphate from alpha-D-glucosamine 6-phosphate (route II): step 2/2. Its pathway is nucleotide-sugar biosynthesis; UDP-N-acetyl-alpha-D-glucosamine biosynthesis; UDP-N-acetyl-alpha-D-glucosamine from N-acetyl-alpha-D-glucosamine 1-phosphate: step 1/1. The protein operates within bacterial outer membrane biogenesis; LPS lipid A biosynthesis. Functionally, catalyzes the last two sequential reactions in the de novo biosynthetic pathway for UDP-N-acetylglucosamine (UDP-GlcNAc). The C-terminal domain catalyzes the transfer of acetyl group from acetyl coenzyme A to glucosamine-1-phosphate (GlcN-1-P) to produce N-acetylglucosamine-1-phosphate (GlcNAc-1-P), which is converted into UDP-GlcNAc by the transfer of uridine 5-monophosphate (from uridine 5-triphosphate), a reaction catalyzed by the N-terminal domain. The protein is Bifunctional protein GlmU of Shewanella baltica (strain OS155 / ATCC BAA-1091).